A 189-amino-acid polypeptide reads, in one-letter code: Lutzicidin (189 aa).

An N-terminal signal peptide occupies residues 1–22 (MQGFFWKTLLVVALCGTSSSLA). Residues 23 to 155 (HRPLSYGEAL…DEEKDRPKRV (133 aa)) constitute a propeptide that is removed on maturation. 2 cysteine pairs are disulfide-bonded: C79/C90 and C101/C118. Positions 125–148 (EEEEEDEEEQKAEVEKDEEKEDEE) are enriched in acidic residues. Residues 125 to 152 (EEEEEDEEEQKAEVEKDEEKEDEEKDRP) are disordered.

It belongs to the cathelicidin family. Expressed by the venom gland.

The protein localises to the secreted. It is found in the target cell membrane. In terms of biological role, potent antimicrobial peptide against Gram-negative and Gram-positive bacteria. Adopts an amphipathic alpha helical conformation, that may allow to partition into the target membrane. Low hemolytic activities have been observed on mammalian cells. This chain is Lutzicidin, found in Bothrops lutzi (Sertao lancehead).